Consider the following 149-residue polypeptide: Gamma-glutamylaminecyclotransferase (149 aa).

7 to 10 is a binding site for substrate; sequence YGTL. Glu82 functions as the Proton acceptor in the catalytic mechanism.

This sequence belongs to the gamma-glutamylcyclotransferase family. As to quaternary structure, monomer.

It catalyses the reaction epsilon-(gamma-L-glutamyl)-L-lysine = 5-oxo-L-proline + L-lysine. Its function is as follows. Contributes to degradation of proteins cross-linked by transglutaminases by degrading the cross-link between a lysine and a glutamic acid residue. Catalyzes the formation of 5-oxo-L-proline from L-gamma-glutamyl-L-epsilon-lysine. Inactive with L-gamma-glutamyl-alpha-amino acid substrates such as L-gamma-glutamyl-L-alpha-cysteine and L-gamma-glutamyl-L-alpha-alanine. The polypeptide is Gamma-glutamylaminecyclotransferase (Ggact) (Mus musculus (Mouse)).